Consider the following 129-residue polypeptide: Transcription antitermination protein NusB (129 aa).

Belongs to the NusB family.

Its function is as follows. Involved in transcription antitermination. Required for transcription of ribosomal RNA (rRNA) genes. Binds specifically to the boxA antiterminator sequence of the ribosomal RNA (rrn) operons. The chain is Transcription antitermination protein NusB from Staphylococcus aureus (strain USA300 / TCH1516).